The sequence spans 725 residues: Dynein axonemal assembly factor 1 (725 aa).

The segment at 1–91 is disordered; it reads MHPEPSEPAT…EDRGPRMTKS (91 aa). Positions 38 to 48 are enriched in basic and acidic residues; the sequence is GCKEEINDPKE. Residues 53–67 show a composition bias toward polar residues; that stretch reads SSDTSYHSQQKQSGD. Over residues 76–86 the composition is skewed to basic and acidic residues; the sequence is HPREDREDRGP. 6 LRR repeats span residues 107-129, 130-151, 152-173, 174-195, 196-217, and 221-242; these read ALNDTLYLHFKGFDRIENLEEYT, GLRCLWLQSNGIQKIENLEAQT, ELRCLFLQMNLLRKIENLEPLQ, KLDALNLSNNYIKTIENLSCLP, VLNTLQMAHNHLETVEDIQHLQ, and RLCVLDLSHNKLSDPEILSILE. The LRRCT domain occupies 256–294; sequence PVIRQIPNYRRTVTVRLKHLTYLDDRPVFPKDRACAEAW. Residues 330–345 show a composition bias toward basic and acidic residues; sequence RAEERKRQRESQERGE. A disordered region spans residues 330-513; the sequence is RAEERKRQRE…LGAAREEPTP (184 aa). Position 358 is a phosphoserine (serine 358). Composition is skewed to basic and acidic residues over residues 360–408 and 481–491; these read EGKE…REDG and VKGEDGDREPE. Threonine 559 bears the Phosphothreonine mark. A phosphoserine mark is found at serine 562 and serine 583. Basic and acidic residues predominate over residues 632 to 642; that stretch reads DLEIRKQDTKS. The tract at residues 632–703 is disordered; it reads DLEIRKQDTK…AATPPETCVG (72 aa).

This sequence belongs to the DNAAF1 family. In terms of tissue distribution, mainly expressed in trachea and testis.

It is found in the cell projection. It localises to the cilium. The protein localises to the cytoplasm. Its subcellular location is the cytoskeleton. The protein resides in the spindle pole. In terms of biological role, cilium-specific protein required for the stability of the ciliary architecture. Plays a role in cytoplasmic preassembly of dynein arms. Involved in regulation of microtubule-based cilia and actin-based brush border microvilli. The chain is Dynein axonemal assembly factor 1 (DNAAF1) from Homo sapiens (Human).